Consider the following 332-residue polypeptide: Fructose-1,6-bisphosphatase class 1 (332 aa).

Positions 89, 110, 112, and 113 each coordinate Mg(2+). Substrate is bound by residues 113–116, N206, Y239, 257–259, and K269; these read DGSS and YLY. Residue E275 participates in Mg(2+) binding.

It belongs to the FBPase class 1 family. As to quaternary structure, homotetramer. The cofactor is Mg(2+).

The protein localises to the cytoplasm. The catalysed reaction is beta-D-fructose 1,6-bisphosphate + H2O = beta-D-fructose 6-phosphate + phosphate. It functions in the pathway carbohydrate biosynthesis; gluconeogenesis. The polypeptide is Fructose-1,6-bisphosphatase class 1 (Shigella sonnei (strain Ss046)).